The sequence spans 299 residues: Transcription factor srbB (299 aa).

Disordered stretches follow at residues 1–33 (MAYNNRPDASTAFTFDNDDRFVNQQPKGPDPLS) and 81–204 (ISGF…NAAK). Over residues 161–170 (PVTSQATTSP) the composition is skewed to low complexity. Polar residues predominate over residues 188–199 (RSLSTDSQTATG). Positions 203–216 (AKRAAHNIIEKRYR) are basic motif. The 62-residue stretch at 203-264 (AKRAAHNIIE…TNAIAYMQEL (62 aa)) folds into the bHLH domain. Residues 217–264 (TNMNAKFVALEKAMSGSGVQKPTKGGSGPASLKKSEILTNAIAYMQEL) are helix-loop-helix motif. The stretch at 254 to 281 (LTNAIAYMQELQDQNAALQKELALLKQN) forms a coiled coil.

It localises to the nucleus. Its function is as follows. Key transcription factors critical for hypoxia adaptation and virulence. Plays a major role in regulation of heme biosynthesis and carbohydrate metabolism early in the response to hypoxia. This chain is Transcription factor srbB, found in Aspergillus fumigatus (strain ATCC MYA-4609 / CBS 101355 / FGSC A1100 / Af293) (Neosartorya fumigata).